The following is a 30-amino-acid chain: Acyl-CoA-binding protein 1 (30 aa).

Residues 1–15 are compositionally biased toward basic and acidic residues; it reads ALKDEFEEHAEKAKT. Residues 1-30 form a disordered region; the sequence is ALKDEFEEHAEKAKTLPENTSNENKLILYG. The ACB domain occupies 2-30; that stretch reads LKDEFEEHAEKAKTLPENTSNENKLILYG.

The protein belongs to the ACBP family.

The protein localises to the cytoplasm. Functionally, binds medium- and long-chain acyl-CoA esters with very high affinity and may function as an intracellular carrier of acyl-CoA esters. This Digitalis lanata (Grecian foxglove) protein is Acyl-CoA-binding protein 1.